A 34-amino-acid polypeptide reads, in one-letter code: Photosystem II reaction center protein M (34 aa).

A helical membrane pass occupies residues 5–25 (ILALIAVALFISIPTAFLVII).

The protein belongs to the PsbM family. As to quaternary structure, PSII is composed of 1 copy each of membrane proteins PsbA, PsbB, PsbC, PsbD, PsbE, PsbF, PsbH, PsbI, PsbJ, PsbK, PsbL, PsbM, PsbT, PsbX, PsbY, PsbZ, Psb30/Ycf12, at least 3 peripheral proteins of the oxygen-evolving complex and a large number of cofactors. It forms dimeric complexes.

The protein resides in the plastid. Its subcellular location is the chloroplast thylakoid membrane. One of the components of the core complex of photosystem II (PSII). PSII is a light-driven water:plastoquinone oxidoreductase that uses light energy to abstract electrons from H(2)O, generating O(2) and a proton gradient subsequently used for ATP formation. It consists of a core antenna complex that captures photons, and an electron transfer chain that converts photonic excitation into a charge separation. This subunit is found at the monomer-monomer interface. The protein is Photosystem II reaction center protein M of Welwitschia mirabilis (Tree tumbo).